The sequence spans 711 residues: Exotoxin translocation ATP-binding protein PaxB (711 aa).

One can recognise a Peptidase C39 domain in the interval 1–129; it reads MEPLMSFKQK…QVFQGNVILL (129 aa). The next 5 membrane-spanning stretches (helical) occupy residues 157–177, 195–215, 273–293, 299–319, and 392–412; these read IFVE…ITPL, LNVI…LSGL, ALTS…MWYY, IVIL…SPIL, and VMII…LSIG. Residues 158 to 440 form the ABC transmembrane type-1 domain; sequence FVEVMIVSIF…LAQLWQDFQQ (283 aa). Positions 472 to 707 constitute an ABC transporter domain; that stretch reads VTFKNIRFRY…KDGLYYYLNQ (236 aa). Position 506 to 513 (506 to 513) interacts with ATP; the sequence is GRSGSGKS.

Belongs to the ABC transporter superfamily. Protein-1 exporter (TC 3.A.1.109) family. In terms of assembly, homodimer.

Its subcellular location is the cell inner membrane. It catalyses the reaction ATP + H2O + proteinSide 1 = ADP + phosphate + proteinSide 2.. In terms of biological role, part of the ABC transporter complex PaxBD involved in PaxA export. Transmembrane domains (TMD) form a pore in the inner membrane and the ATP-binding domain (NBD) is responsible for energy generation. This Pasteurella aerogenes protein is Exotoxin translocation ATP-binding protein PaxB (paxB).